A 329-amino-acid chain; its full sequence is Glucokinase (329 aa).

Residue 13–18 coordinates ATP; the sequence is GDIGGT.

Belongs to the bacterial glucokinase family.

It localises to the cytoplasm. It catalyses the reaction D-glucose + ATP = D-glucose 6-phosphate + ADP + H(+). The polypeptide is Glucokinase (Caulobacter sp. (strain K31)).